A 693-amino-acid chain; its full sequence is A disintegrin and metalloproteinase with thrombospondin motifs like (693 aa).

The first 24 residues, 1-24 (MESSVATHWLSAFVILCSFITTQS), serve as a signal peptide directing secretion. Residues 67-80 (IPTSHPANSNSADS) are compositionally biased toward polar residues. The segment at 67–91 (IPTSHPANSNSADSGKTPHLKTEKV) is disordered. N-linked (GlcNAc...) asparagine glycans are attached at residues Asn-124 and Asn-194. The Peptidase M12B domain occupies 353–585 (IYPEILVIVD…DTATCLYNSP (233 aa)). Intrachain disulfides connect Cys-485-Cys-580 and Cys-541-Cys-564. His-514 lines the Zn(2+) pocket. Positions 514-525 (HEVGHLLGAVHD) match the Metal-binding motif. Glu-515 is a catalytic residue. Residues His-518 and His-524 each coordinate Zn(2+). Asn-687 carries N-linked (GlcNAc...) asparagine glycosylation.

Requires Zn(2+) as cofactor.

The protein localises to the secreted. It localises to the extracellular space. The protein resides in the extracellular matrix. Functionally, involved in larval molting and metamorphosis. May degrade extracellular matrix (ECM) and basement membrane (BM) during the development of organs to allow degeneration and remodeling of tissues. The polypeptide is A disintegrin and metalloproteinase with thrombospondin motifs like (Bombyx mori (Silk moth)).